Consider the following 340-residue polypeptide: MDFIDEVKLYLKAGDGGDGCVSFRREKFVEFGGPNGGNGGKGGNIVFVSDANLNTLLNFRYRRHVKAGSGKSGASRDRSGTAGKNIVLKVPVGTQIIDEESEKIILDFNKPDMEFLIAQGGKGGLGNTNFKSSINRAPRHFTCGQFGEEKYVVLKLKVLSDVGIIGMPNAGKSKFLTRCSNADTKVGDYPFTTIKPHLGVAKVDNSEVVIVDIPGIITDAHLGIGLGHKFLKHVERCKILLHLIDVTHDNVVSAYNCMRNELELYNSDLVKKEEIIVLNKCDLLRKVEIFEKKNHLANYLNKEVLCLSIGEDLQPILRLLNEKLKKGSSKKVDVYDPFKR.

The Obg domain maps to 1 to 159; it reads MDFIDEVKLY…KYVVLKLKVL (159 aa). The OBG-type G domain maps to 160–329; it reads SDVGIIGMPN…LNEKLKKGSS (170 aa). GTP is bound by residues 166–173, 191–195, 212–215, 279–282, and 310–312; these read GMPNAGKS, FTTIK, DIPG, NKCD, and GED. Residues Ser-173 and Thr-193 each coordinate Mg(2+).

The protein belongs to the TRAFAC class OBG-HflX-like GTPase superfamily. OBG GTPase family. Monomer. Mg(2+) is required as a cofactor.

The protein resides in the cytoplasm. An essential GTPase which binds GTP, GDP and possibly (p)ppGpp with moderate affinity, with high nucleotide exchange rates and a fairly low GTP hydrolysis rate. Plays a role in control of the cell cycle, stress response, ribosome biogenesis and in those bacteria that undergo differentiation, in morphogenesis control. The polypeptide is GTPase Obg (Wolbachia sp. subsp. Brugia malayi (strain TRS)).